A 147-amino-acid chain; its full sequence is Transthyretin (147 aa).

The first 20 residues, 1-20 (MASHRLLLLCLAGLVFVSEA), serve as a signal peptide directing secretion. Position 30 is a sulfocysteine (Cys30). Residue Lys35 participates in L-thyroxine binding. Glu62 carries the post-translational modification 4-carboxyglutamate; in a patient with Moyamoya disease. A Phosphoserine modification is found at Ser72. Glu74 provides a ligand contact to L-thyroxine. A glycan (N-linked (GlcNAc...) asparagine) is linked at Asn118. L-thyroxine is bound at residue Ser137.

Belongs to the transthyretin family. In terms of assembly, homotetramer. Dimer of dimers. In the homotetramer, subunits assemble around a central channel that can accommodate two ligand molecules. Interacts with RBP4. Post-translationally, not glycosylated under normal conditions. Following unfolding, caused for example by variant AMYLD1 'Gly-38', the cryptic Asn-118 site is exposed and glycosylated by STT3B-containing OST complex, leading to its degradation by the ER-associated degradation (ERAD) pathway. Sulfonation of the reactive cysteine Cys-30 enhances the stability of the native conformation of TTR, avoiding misassembly of the protein leading to amyloid formation. In terms of tissue distribution, detected in serum and cerebrospinal fluid (at protein level). Highly expressed in choroid plexus epithelial cells. Detected in retina pigment epithelium and liver.

It is found in the secreted. It localises to the cytoplasm. Thyroid hormone-binding protein. Probably transports thyroxine from the bloodstream to the brain. The polypeptide is Transthyretin (TTR) (Homo sapiens (Human)).